Here is a 41-residue protein sequence, read N- to C-terminus: ORF3c protein (41 aa).

May play a role in host modulation. The polypeptide is ORF3c protein (Severe acute respiratory syndrome coronavirus 2 (2019-nCoV)).